Reading from the N-terminus, the 231-residue chain is Large ribosomal subunit protein uL1 (231 aa).

Belongs to the universal ribosomal protein uL1 family. As to quaternary structure, part of the 50S ribosomal subunit.

Binds directly to 23S rRNA. The L1 stalk is quite mobile in the ribosome, and is involved in E site tRNA release. Functionally, protein L1 is also a translational repressor protein, it controls the translation of the L11 operon by binding to its mRNA. The protein is Large ribosomal subunit protein uL1 of Dechloromonas aromatica (strain RCB).